The following is a 281-amino-acid chain: Small ribosomal subunit protein uS2 (281 aa).

Positions 233–281 (NKAEGEAAEQPMAAWEKELLTNEAPAEASAEAAAPAAAEGETAEAPKAE) are disordered. The segment covering 255 to 275 (EAPAEASAEAAAPAAAEGETA) has biased composition (low complexity).

The protein belongs to the universal ribosomal protein uS2 family.

In Bifidobacterium longum (strain DJO10A), this protein is Small ribosomal subunit protein uS2.